Consider the following 262-residue polypeptide: uncharacterized protein (262 aa).

Residues 41 to 118 (ELQKNEKIDK…EEKAEDFINK (78 aa)) adopt a coiled-coil conformation.

This is an uncharacterized protein from Plasmodium falciparum (isolate 3D7).